Reading from the N-terminus, the 276-residue chain is Hydroxyethylthiazole kinase (276 aa).

2 residues coordinate ATP: Arg-126 and Ser-172. A substrate-binding site is contributed by Gly-199.

The protein belongs to the Thz kinase family. The cofactor is Mg(2+).

It catalyses the reaction 5-(2-hydroxyethyl)-4-methylthiazole + ATP = 4-methyl-5-(2-phosphooxyethyl)-thiazole + ADP + H(+). It participates in cofactor biosynthesis; thiamine diphosphate biosynthesis; 4-methyl-5-(2-phosphoethyl)-thiazole from 5-(2-hydroxyethyl)-4-methylthiazole: step 1/1. Its function is as follows. Catalyzes the phosphorylation of the hydroxyl group of 4-methyl-5-beta-hydroxyethylthiazole (THZ). This Burkholderia pseudomallei (strain 1710b) protein is Hydroxyethylthiazole kinase.